The following is a 57-amino-acid chain: MAVPKRKMSRSNTRHRRSQWKAAVPTLVACERCHEPKLQHIACPACGTYNKRQVLEV.

Belongs to the bacterial ribosomal protein bL32 family.

The chain is Large ribosomal subunit protein bL32A (rpmF1) from Streptomyces coelicolor (strain ATCC BAA-471 / A3(2) / M145).